A 91-amino-acid chain; its full sequence is Small ribosomal subunit protein uS19 (91 aa).

The protein belongs to the universal ribosomal protein uS19 family.

Functionally, protein S19 forms a complex with S13 that binds strongly to the 16S ribosomal RNA. This is Small ribosomal subunit protein uS19 from Synechococcus sp. (strain CC9311).